A 230-amino-acid chain; its full sequence is Large ribosomal subunit protein uL1 (230 aa).

This sequence belongs to the universal ribosomal protein uL1 family. As to quaternary structure, part of the 50S ribosomal subunit.

Its function is as follows. Binds directly to 23S rRNA. The L1 stalk is quite mobile in the ribosome, and is involved in E site tRNA release. In terms of biological role, protein L1 is also a translational repressor protein, it controls the translation of the L11 operon by binding to its mRNA. The sequence is that of Large ribosomal subunit protein uL1 from Lactobacillus acidophilus (strain ATCC 700396 / NCK56 / N2 / NCFM).